A 282-amino-acid polypeptide reads, in one-letter code: B3 domain-containing protein At5g25475 (282 aa).

Positions 20 to 114 form a DNA-binding region, TF-B3; the sequence is WKSLSPGQTW…NLEVQIFKNN (95 aa). The segment at 127–178 is disordered; that stretch reads PETEPFHPTPKKPHKETTPASSFASGSGCSANGGTNGRGKQRSSDVKNPERY. Positions 144 to 159 are enriched in low complexity; that stretch reads TPASSFASGSGCSANG.

It is found in the nucleus. In Arabidopsis thaliana (Mouse-ear cress), this protein is B3 domain-containing protein At5g25475.